A 383-amino-acid chain; its full sequence is NADH-quinone oxidoreductase subunit D 1 (383 aa).

This sequence belongs to the complex I 49 kDa subunit family. In terms of assembly, NDH-1 is composed of 14 different subunits. Subunits NuoB, C, D, E, F, and G constitute the peripheral sector of the complex.

It is found in the cell membrane. The enzyme catalyses a quinone + NADH + 5 H(+)(in) = a quinol + NAD(+) + 4 H(+)(out). Its function is as follows. NDH-1 shuttles electrons from NADH, via FMN and iron-sulfur (Fe-S) centers, to quinones in the respiratory chain. The immediate electron acceptor for the enzyme in this species is believed to be a menaquinone. Couples the redox reaction to proton translocation (for every two electrons transferred, four hydrogen ions are translocated across the cytoplasmic membrane), and thus conserves the redox energy in a proton gradient. This chain is NADH-quinone oxidoreductase subunit D 1, found in Streptomyces coelicolor (strain ATCC BAA-471 / A3(2) / M145).